A 454-amino-acid chain; its full sequence is tRNA modification GTPase MnmE (454 aa).

R23, E80, and K120 together coordinate (6S)-5-formyl-5,6,7,8-tetrahydrofolate. Residues 216 to 377 form the TrmE-type G domain; it reads GMKVVIAGRP…LRNHLKQSMG (162 aa). Residue N226 participates in K(+) binding. Residues 226 to 231, 245 to 251, 270 to 273, 335 to 338, and 358 to 360 contribute to the GTP site; these read NAGKSS, TDIAGTT, DTAG, NKAD, and SAR. Mg(2+) is bound at residue S230. Residues T245, I247, and T250 each coordinate K(+). T251 lines the Mg(2+) pocket. K454 provides a ligand contact to (6S)-5-formyl-5,6,7,8-tetrahydrofolate.

The protein belongs to the TRAFAC class TrmE-Era-EngA-EngB-Septin-like GTPase superfamily. TrmE GTPase family. Homodimer. Heterotetramer of two MnmE and two MnmG subunits. The cofactor is K(+).

It localises to the cytoplasm. Its function is as follows. Exhibits a very high intrinsic GTPase hydrolysis rate. Involved in the addition of a carboxymethylaminomethyl (cmnm) group at the wobble position (U34) of certain tRNAs, forming tRNA-cmnm(5)s(2)U34. The chain is tRNA modification GTPase MnmE from Klebsiella pneumoniae subsp. pneumoniae (strain ATCC 700721 / MGH 78578).